The sequence spans 417 residues: D-amino acid dehydrogenase (417 aa).

V3 to W17 is a binding site for FAD.

This sequence belongs to the DadA oxidoreductase family. FAD is required as a cofactor.

The catalysed reaction is a D-alpha-amino acid + A + H2O = a 2-oxocarboxylate + AH2 + NH4(+). It participates in amino-acid degradation; D-alanine degradation; NH(3) and pyruvate from D-alanine: step 1/1. Oxidative deamination of D-amino acids. In Pectobacterium atrosepticum (strain SCRI 1043 / ATCC BAA-672) (Erwinia carotovora subsp. atroseptica), this protein is D-amino acid dehydrogenase.